The following is a 252-amino-acid chain: ATP-dependent L-serine kinase (252 aa).

Residue E35 is part of the active site. V73 is an O-phospho-L-serine binding site. A Mg(2+)-binding site is contributed by D74. The O-phospho-L-serine site is built by G75, H76, H77, W107, K231, T233, and H235.

It belongs to the SerK family. As to quaternary structure, monomer. It depends on Mg(2+) as a cofactor.

The catalysed reaction is L-serine + ATP = O-phospho-L-serine + ADP + H(+). Free serine kinase that uses ATP to phosphorylate L-serine to yield O-phospho-L-serine and ADP. Can use ATP, UTP, CTP, GTP and the inorganic polyphosphates triphosphate and tetraphosphate as phosphate donors, with a preference for nucleoside 5'-triphosphates, but cannot use ADP. The catalytic efficiency is highest for ATP. Is specific for L-serine and cannot phosphorylate structurally similar compounds such as D-serine, L-threonine, L-homoserine, hydroxypyruvate, 3-hydroxypropionate and DL-glycerate. Likely contributes to serine metabolism, including cysteine biosynthesis. This chain is ATP-dependent L-serine kinase, found in Staphylothermus marinus (strain ATCC 43588 / DSM 3639 / JCM 9404 / F1).